Consider the following 677-residue polypeptide: MAEKKKVKEGKGRKGKGKKDRKGKKAEGSDQGAAASPKLKEIKTQSVQEGKKLVLKCQAVSEQPSLKFRWFKGEKEIGAKNKPDSKPEHIKIRGKKKSSELQISKASSADNGEYKCMVSNQLGNDTVTVNVTIVPKPTYNHLLLMKIYLKVTSVEKSVEPSTLNLLESQKEVIFATTKRGDTTAGPGHLIKCSDKEKTYCVNGGECYVLNGITSSNQFMCKCKPGFTGARCTETDPLRVVRSEKHLGIEFMEAEELYQKRVLTITGICIDLLVVGDMCVVDAYCKTKKQRKKLNDRLRQSLRERNKNITNKDNRPHNPKNPPPRKNVQLVNQYVSKNVISSEHVIERETETSFSTSHYTSTTHHSTTVTQTPSHSWSNGLSESMISEKSYSVIVTSSVENSRHTSPTGPRGRLNGIGGPRDCSYLRHARDTPDSYRDSPHSERYVSAMTTPARMSPVEFKTPISPKSPCLETSPPESSLAVSVPSVAVSPFIEEERPLLLVSPPRLREKRYDRKTPQKTPHKQHNSYHHNPGHDSSSLPPNPLRIVEDEEYETTQEYEPSLEPAKKLVNSRRQKRTKPNGHISNRLELDSDSSSESSTSESETEDERIGEETPFLSIQNPLAASLESASLYRHADSRTNPTSRFSTQEELQARLSSIANQALCDQKKRKMTCKTLFI.

Positions 1-12 are enriched in basic and acidic residues; it reads MAEKKKVKEGKG. Disordered regions lie at residues 1 to 43 and 78 to 106; these read MAEK…KEIK and GAKN…ISKA. At 1–260 the chain is on the extracellular side; sequence MAEKKKVKEG…MEAEELYQKR (260 aa). The segment covering 13-24 has biased composition (basic residues); sequence RKGKGKKDRKGK. The region spanning 37-132 is the Ig-like C2-type domain; that stretch reads PKLKEIKTQS…GNDTVTVNVT (96 aa). A disulfide bond links C57 and C116. Residues 78 to 91 show a composition bias toward basic and acidic residues; the sequence is GAKNKPDSKPEHIK. 2 N-linked (GlcNAc...) asparagine glycosylation sites follow: N124 and N130. The EGF-like domain maps to 188 to 232; sequence HLIKCSDKEKTYCVNGGECYVLNGITSSNQFMCKCKPGFTGARCT. Cystine bridges form between C192–C206, C200–C220, and C222–C231. A helical transmembrane segment spans residues 261–280; the sequence is VLTITGICIDLLVVGDMCVV. Residues 281-677 are Cytoplasmic-facing; sequence DAYCKTKKQR…RKMTCKTLFI (397 aa). Residues 294–315 show a composition bias toward basic and acidic residues; the sequence is NDRLRQSLRERNKNITNKDNRP. Disordered regions lie at residues 294–326, 350–375, 397–418, 457–479, and 503–617; these read NDRL…PRKN, ETSF…PSHS, SVEN…GIGG, VEFK…ESSL, and PPRL…FLSI. Over residues 351–375 the composition is skewed to low complexity; that stretch reads TSFSTSHYTSTTHHSTTVTQTPSHS. Polar residues predominate over residues 397 to 407; it reads SVENSRHTSPT. Residues 505–515 show a composition bias toward basic and acidic residues; it reads RLREKRYDRKT. Over residues 568 to 578 the composition is skewed to basic residues; the sequence is VNSRRQKRTKP. Residues 591 to 600 show a composition bias toward low complexity; it reads DSSSESSTSE.

The protein belongs to the neuregulin family. Post-translationally, proteolytic cleavage close to the plasma membrane on the external face leads to the release of the soluble growth factor form. Extensive glycosylation precedes the proteolytic cleavage. As to expression, isoform alpha1 is expressed in brain and muscle. Isoform CRD is expressed in brain and spinal cord, but at very low level in muscle.

The protein resides in the cell membrane. It localises to the secreted. Its function is as follows. Direct ligand for the ERBB tyrosine kinase receptors. Induces expression of acetylcholine receptor in synaptic nuclei. This chain is Pro-neuregulin-1, membrane-bound isoform (nrg1), found in Xenopus laevis (African clawed frog).